Reading from the N-terminus, the 353-residue chain is Replication factor C subunit 2 (353 aa).

Met-1 bears the N-acetylmethionine mark. ATP-binding positions include Val-28, Arg-32, 65-73 (GPPGTGKTS), Asn-171, and Arg-229.

This sequence belongs to the activator 1 small subunits family. As to quaternary structure, replication factor C (RFC) is a heteropentamer of subunits RFC1, RFC2, RFC3, RFC4 and RFC5 and forms a complex with POL30/PCNA in the presence of ATP. Component of the RAD24-RFC complex which consists of RAD14, RFC2, RFC3, RFC4 and RFC5 and associates with the checkpoint clamp DDC1:MEC3:RAD17 complex. Component of the ELG1-RFC complex which consists of ELG1, RFC2, RFC3, RFC4 and RFC5. Component of the CTF18-RFC complex, which consists of CTF18, CTF8, DCC1, RFC2, RFC3, RFC4 and RFC5. RFC2 interacts with ECO1.

It localises to the nucleus. Component of ATP-dependent clamp loader (RFC and RFC-like) complexes for DNA clamps, such as the POL30/PCNA homotrimer and the checkpoint clamp DDC1:MEC3:RAD17 complex. During a clamp loading circle, the RFC:clamp complex binds to DNA and the recognition of the double-stranded/single-stranded junction stimulates ATP hydrolysis by RFC. The complex presumably provides bipartite ATP sites in which one subunit supplies a catalytic site for hydrolysis of ATP bound to the neighboring subunit. Dissociation of RFC from the clamp leaves the clamp encircling DNA. Component of the replication factor C (RFC or activator 1) complex which loads POL30/PCNA and acts during elongation of primed DNA templates by DNA polymerase delta and epsilon. RFC has an essential but redundant activity in sister chromatid cohesion establishment. Component of the RFC-like complex CTF18-RFC which is required for efficient establishment of chromosome cohesion during S-phase and may load or unload POL30/PCNA. Component of the RFC-like RAD24-RFC complex which loads the checkpoint clamp DDC1:MEC3:RAD17 complex and is involved in DNA repair pathways. Component of the RFC-like ELG1-RFC complex which appears to have a role in DNA replication, replication fork re-start, recombination and repair. RFC2 binds ATP and single-stranded DNA. This is Replication factor C subunit 2 (RFC2) from Saccharomyces cerevisiae (strain ATCC 204508 / S288c) (Baker's yeast).